The sequence spans 209 residues: Glutathione S-transferase 1-1 (209 aa).

In terms of domain architecture, GST N-terminal spans 1–81 (MADFYYLPGS…YLVEKYGKTD (81 aa)). Glutathione contacts are provided by residues 51–53 (HTI) and 65–67 (ESR). Residues 87 to 209 (CPKKRAVINQ…GCLEFKKYFE (123 aa)) form the GST C-terminal domain.

The protein belongs to the GST superfamily. Theta family. As to quaternary structure, homodimer.

It carries out the reaction RX + glutathione = an S-substituted glutathione + a halide anion + H(+). Functionally, conjugation of reduced glutathione to a wide number of exogenous and endogenous hydrophobic electrophiles. This is Glutathione S-transferase 1-1 (GstD1) from Drosophila yakuba (Fruit fly).